A 777-amino-acid polypeptide reads, in one-letter code: Serine/threonine-protein kinase PTK2 (777 aa).

A disordered region spans residues 21–174; sequence NKLRGNNDST…ISSGSASSTN (154 aa). The span at 30–41 shows a compositional bias: low complexity; sequence TPAAAPAPVPTK. Polar residues-rich tracts occupy residues 50 to 61 and 83 to 133; these read AHISRSASTNTP and RRST…SQHM. Over residues 149–172 the composition is skewed to low complexity; sequence SSVRGSSYSRHGSGSHISSGSASS. Positions 222-529 constitute a Protein kinase domain; it reads DKDNKTIGSG…MEDLFNDPWF (308 aa). ATP contacts are provided by residues 228–236 and K252; that span reads IGSGGSSEV. The active-site Proton acceptor is D355. Disordered stretches follow at residues 564-705 and 728-764; these read DAHP…EITE and SVSGAATAPIPRRDPSNRSIHSNATSTGTAGRKKKVV. Composition is skewed to polar residues over residues 575–592 and 648–672; these read TDTNGGLHSDSENPAGTH and TNTTAEADNEKAQTVPTSAVDTNEF. Positions 677 to 694 are enriched in low complexity; the sequence is NATTTDNDNVNTKATTAD. Residues 744-756 are compositionally biased toward polar residues; that stretch reads NRSIHSNATSTGT.

Belongs to the protein kinase superfamily. Ser/Thr protein kinase family.

It carries out the reaction L-seryl-[protein] + ATP = O-phospho-L-seryl-[protein] + ADP + H(+). The enzyme catalyses L-threonyl-[protein] + ATP = O-phospho-L-threonyl-[protein] + ADP + H(+). The protein is Serine/threonine-protein kinase PTK2 (PTK2) of Candida glabrata (strain ATCC 2001 / BCRC 20586 / JCM 3761 / NBRC 0622 / NRRL Y-65 / CBS 138) (Yeast).